The following is a 336-amino-acid chain: Ketol-acid reductoisomerase (NADP(+)) (336 aa).

Residues 1–182 (MAVIYYDKDA…GVTRAGVIET (182 aa)) form the KARI N-terminal Rossmann domain. NADP(+) contacts are provided by residues 25 to 28 (YGSQ), Arg-48, Ser-51, Ser-53, and 83 to 86 (DENQ). His-108 is a catalytic residue. Gly-134 contacts NADP(+). In terms of domain architecture, KARI C-terminal knotted spans 183-328 (TFKEETETDL…KELRKMMPWL (146 aa)). Residues Asp-191, Glu-195, Glu-227, and Glu-231 each contribute to the Mg(2+) site. Residue Ser-252 participates in substrate binding.

It belongs to the ketol-acid reductoisomerase family. Mg(2+) serves as cofactor.

The catalysed reaction is (2R)-2,3-dihydroxy-3-methylbutanoate + NADP(+) = (2S)-2-acetolactate + NADPH + H(+). It catalyses the reaction (2R,3R)-2,3-dihydroxy-3-methylpentanoate + NADP(+) = (S)-2-ethyl-2-hydroxy-3-oxobutanoate + NADPH + H(+). Its pathway is amino-acid biosynthesis; L-isoleucine biosynthesis; L-isoleucine from 2-oxobutanoate: step 2/4. The protein operates within amino-acid biosynthesis; L-valine biosynthesis; L-valine from pyruvate: step 2/4. Involved in the biosynthesis of branched-chain amino acids (BCAA). Catalyzes an alkyl-migration followed by a ketol-acid reduction of (S)-2-acetolactate (S2AL) to yield (R)-2,3-dihydroxy-isovalerate. In the isomerase reaction, S2AL is rearranged via a Mg-dependent methyl migration to produce 3-hydroxy-3-methyl-2-ketobutyrate (HMKB). In the reductase reaction, this 2-ketoacid undergoes a metal-dependent reduction by NADPH to yield (R)-2,3-dihydroxy-isovalerate. This chain is Ketol-acid reductoisomerase (NADP(+)), found in Thermotoga petrophila (strain ATCC BAA-488 / DSM 13995 / JCM 10881 / RKU-1).